Reading from the N-terminus, the 348-residue chain is D-erythrose-4-phosphate dehydrogenase (348 aa).

NAD(+)-binding positions include 12–13 (RI) and Arg-81. Residues 154–156 (SCT), Arg-200, 213–214 (TK), and Arg-236 contribute to the substrate site. Residue Cys-155 is the Nucleophile of the active site. Asn-318 serves as a coordination point for NAD(+).

This sequence belongs to the glyceraldehyde-3-phosphate dehydrogenase family. Epd subfamily. As to quaternary structure, homotetramer.

The protein localises to the cytoplasm. It catalyses the reaction D-erythrose 4-phosphate + NAD(+) + H2O = 4-phospho-D-erythronate + NADH + 2 H(+). It participates in cofactor biosynthesis; pyridoxine 5'-phosphate biosynthesis; pyridoxine 5'-phosphate from D-erythrose 4-phosphate: step 1/5. In terms of biological role, catalyzes the NAD-dependent conversion of D-erythrose 4-phosphate to 4-phosphoerythronate. The protein is D-erythrose-4-phosphate dehydrogenase of Salmonella paratyphi A (strain ATCC 9150 / SARB42).